Reading from the N-terminus, the 738-residue chain is YTH domain-containing protein 1 (738 aa).

Residues 1-12 (MAADSREEKDGE) show a composition bias toward basic and acidic residues. The tract at residues 1-341 (MAADSREEKD…KHEKLSSSVR (341 aa)) is disordered. Serine 35 bears the Phosphoserine mark. The span at 50 to 59 (ERMESIDTKR) shows a compositional bias: basic and acidic residues. The segment covering 63–90 (SIHSRQLISKPLSSSVSNNKRIVSTKGK) has biased composition (polar residues). Over residues 91 to 115 (SVTEYKNEEYQRSERNKRLDADRKI) the composition is skewed to basic and acidic residues. Lysine 96 is covalently cross-linked (Glycyl lysine isopeptide (Lys-Gly) (interchain with G-Cter in SUMO2)). Serine 118 and serine 120 each carry phosphoserine. The segment covering 124 to 144 (EPYKSQPEKPCLRKRDSERRA) has biased composition (basic and acidic residues). A Phosphoserine modification is found at serine 146. Threonine 148 is subject to Phosphothreonine. Composition is skewed to basic and acidic residues over residues 151–163 (GSERIGLEVDRRA) and 170–185 (SKEEGNSEEYGSDHET). Polar residues predominate over residues 186 to 197 (GSSASSEQGNNT). Residues 198 to 257 (ENEEEGGEEDVEEDEEVDEDGDDDEEVDEDAEEEEDEEEDEEEEDEEEEEEEEEEYEQDE) show a composition bias toward acidic residues. Residues 258 to 273 (RDQKEEGNDYDTRSEA) are compositionally biased toward basic and acidic residues. Positions 283 to 292 (FTDGSVRSGS) are enriched in polar residues. A phosphoserine mark is found at serine 311, serine 318, serine 320, serine 321, and serine 323. Residues 318-328 (SGSSASESYAG) show a composition bias toward low complexity. Residues 358–495 (ARFFLIKSNN…ECGTQLCLLF (138 aa)) form the YTH domain. RNA is bound by residues 364-366 (KSN) and tryptophan 380. Serine 427 is modified (phosphoserine). Position 431 (tryptophan 431) interacts with RNA. Position 438 is a phosphoserine (serine 438). Aspartate 479 lines the RNA pocket. Residues 512 to 526 (HKRRMHSQPRSRGRP) are compositionally biased toward basic residues. Disordered stretches follow at residues 512–566 (HKRR…RPGY), 618–654 (GMPPYPGIEQPPHHPYYQHHAPPPQAHPPYSGHHPVP), and 680–738 (AVVS…RYRR). Basic and acidic residues predominate over residues 527-566 (SRREPVRDVGRRRPEDYDIHNSRKKPRIDYPPEFHQRPGY). Residue serine 548 is modified to Phosphoserine. Over residues 690–738 (RERDRERERDRPRDNRRDRERDRGRDRERERERICDRDRDRGERGRYRR) the composition is skewed to basic and acidic residues.

As to quaternary structure, interacts with SRSF1. Interacts with SRSF2. Interacts with SRSF3. Interacts with SRSF7. Interacts with SRSF10. Interacts with CPSF6. Interacts with KHDRBS1/SAM68. Interacts with TRA2B. Interacts with KHDRBS3. Interacts with EMD. Interacts with RBMX. Interacts with ZCCHC8. Tyrosine phosphorylated. Ubiquitous.

The protein localises to the nucleus. Its subcellular location is the nucleus speckle. In terms of biological role, regulator of alternative splicing that specifically recognizes and binds N6-methyladenosine (m6A)-containing RNAs. M6A is a modification present at internal sites of mRNAs and some non-coding RNAs and plays a role in the efficiency of mRNA splicing, processing and stability. Acts as a key regulator of exon-inclusion or exon-skipping during alternative splicing via interaction with mRNA splicing factors SRSF3 and SRSF10. Specifically binds m6A-containing mRNAs and promotes recruitment of SRSF3 to its mRNA-binding elements adjacent to m6A sites, leading to exon-inclusion during alternative splicing. In contrast, interaction with SRSF3 prevents interaction with SRSF10, a splicing factor that promotes exon skipping: this prevents SRSF10 from binding to its mRNA-binding sites close to m6A-containing regions, leading to inhibit exon skipping during alternative splicing. May also regulate alternative splice site selection. Also involved in nuclear export of m6A-containing mRNAs via interaction with SRSF3: interaction with SRSF3 facilitates m6A-containing mRNA-binding to both SRSF3 and NXF1, promoting mRNA nuclear export. Involved in S-adenosyl-L-methionine homeostasis by regulating expression of MAT2A transcripts, probably by binding m6A-containing MAT2A mRNAs. Also recognizes and binds m6A on other RNA molecules. Involved in random X inactivation mediated by Xist RNA: recognizes and binds m6A-containing Xist and promotes transcription repression activity of Xist. Also recognizes and binds m6A-containing single-stranded DNA. Involved in germline development: required for spermatogonial development in males and oocyte growth and maturation in females, probably via its role in alternative splicing. The chain is YTH domain-containing protein 1 (Ythdc1) from Rattus norvegicus (Rat).